We begin with the raw amino-acid sequence, 173 residues long: MKKFLLLSLMSLASSTVFAASSTNTIGIVNLRRCLEESELGKKESAEFEKMKNQFSNSIGKMEEELSSIYSKLQDDDYMEGLSESAAAELRKKFEELSSEYNTAQGQYYQILNQNNLKRMQKIMEAVKKASEVVRIQEGLSALLNEDIVLAIDTSSDKTDAVIKILDDSFQNN.

The N-terminal stretch at 1-19 (MKKFLLLSLMSLASSTVFA) is a signal peptide.

Belongs to the Skp family.

The protein is Skp-like protein of Chlamydia muridarum (strain MoPn / Nigg).